The following is a 550-amino-acid chain: Acetyl-coenzyme A transporter 1 (550 aa).

Basic and acidic residues-rich tracts occupy residues 1-12 (MSPTISHKDSSR) and 36-52 (DDSRRDSVGGEGDREVL). The interval 1–58 (MSPTISHKDSSRQRRSGMFSHALDMKSGPLPPGGWDDSRRDSVGGEGDREVLLGDAGP) is disordered. Topologically, residues 1-74 (MSPTISHKDS…PRSYRSELSS (74 aa)) are cytoplasmic. Phosphoserine is present on Ser-42. The chain crosses the membrane as a helical span at residues 75-95 (ILLLLFLYVLQGIPLGLAGSI). Topologically, residues 96 to 113 (PLILQSKNVSYTDQAFFS) are extracellular. N-linked (GlcNAc...) asparagine glycosylation is present at Asn-103. Residues 114-134 (FVFWPFSLKLLWAPLVDAVYF) form a helical membrane-spanning segment. At 135-141 (KNFGRRK) the chain is on the cytoplasmic side. The helical transmembrane segment at 142 to 162 (SWLVPTQYTLGIFMIYLSTQV) threads the bilayer. The Extracellular segment spans residues 163 to 175 (DRLLGNIDGRTPD). The helical transmembrane segment at 176-196 (VVALTVTFFLFEFLAATQDIA) threads the bilayer. Topologically, residues 197–217 (VDGWALTMLSRENVGYASTCN) are cytoplasmic. The helical transmembrane segment at 218-238 (SVGQTAGYFLGNVLFLALESA) threads the bilayer. Over 239 to 256 (DFCNKYLRFQPQPRGIVT) the chain is Extracellular. Residues 257 to 277 (LSDFLFFWGTVFLITTTLVAL) traverse the membrane as a helical segment. Over 278 to 300 (LKKENREASIVKEETQGITDTYK) the chain is Cytoplasmic. A helical transmembrane segment spans residues 301 to 321 (LLFSIIKMPAVLAFCLLILTS). Over 322–344 (KIGFSAADAVTGLKLVEEGVPKE) the chain is Extracellular. Residues 345 to 365 (HLALLAVPMVPLQIILPLLIS) form a helical membrane-spanning segment. The Cytoplasmic portion of the chain corresponds to 366–375 (KYTAGPQPLN). Residues 376-396 (IFYKAMPYRLLLGLEYALLVW) traverse the membrane as a helical segment. The Extracellular portion of the chain corresponds to 397–405 (WTPKVEHQG). The chain crosses the membrane as a helical span at residues 406-426 (GFPLYYYIIVLLSYALHQVTL). Residues 427 to 509 (YSMYVSIMAF…LGGSCVTALD (83 aa)) are Cytoplasmic-facing. Residues 510-530 (GYYVESIICVLIGFGWWFFLG) traverse the membrane as a helical segment. Residues 531 to 550 (PKFKKLQDEGPSSWKCKRNN) are Extracellular-facing.

This sequence belongs to the SLC33A transporter family. In terms of assembly, homodimerizes. As to expression, expressed in all adult tissues examined including brain, heart, kidney, liver and spleen, with maximum expression in liver and kidney.

Its subcellular location is the endoplasmic reticulum membrane. The enzyme catalyses acetyl-CoA(in) = acetyl-CoA(out). In terms of biological role, acetyl-CoA transporter that mediates active acetyl-CoA import through the endoplasmic reticulum (ER) membrane into the ER lumen where specific ER-based acetyl-CoA:lysine acetyltransferases are responsible for the acetylation of ER-based protein substrate, such as BACE1. Necessary for O-acetylation of gangliosides. This chain is Acetyl-coenzyme A transporter 1 (Slc33a1), found in Mus musculus (Mouse).